A 312-amino-acid polypeptide reads, in one-letter code: Ornithine carbamoyltransferase, catabolic (312 aa).

Residues 57-60, glutamine 84, arginine 108, and 135-138 contribute to the carbamoyl phosphate site; these read STRT and HPTQ. L-ornithine contacts are provided by residues asparagine 167, aspartate 231, and 235 to 236; that span reads SM. Position 272 to 273 (272 to 273) interacts with carbamoyl phosphate; sequence CL.

This sequence belongs to the aspartate/ornithine carbamoyltransferase superfamily. OTCase family.

It is found in the cytoplasm. It catalyses the reaction carbamoyl phosphate + L-ornithine = L-citrulline + phosphate + H(+). It participates in amino-acid degradation; L-arginine degradation via ADI pathway; carbamoyl phosphate from L-arginine: step 2/2. Its function is as follows. Reversibly catalyzes the transfer of the carbamoyl group from carbamoyl phosphate (CP) to the N(epsilon) atom of ornithine (ORN) to produce L-citrulline. The polypeptide is Ornithine carbamoyltransferase, catabolic (arcB) (Mycoplasma capricolum subsp. capripneumoniae).